The following is a 655-amino-acid chain: THO complex subunit 1 (655 aa).

2 disordered regions span residues 403-427 (ERPAETKPIRPSRKRQAPEDFLGKG) and 539-574 (PSEEIKTGEEDDDENGDNLLKDSNDSPSIQSKAVTN). Residues 415–431 (RKRQAPEDFLGKGPDRK) carry the Nuclear localization signal motif. Over residues 418 to 427 (QAPEDFLGKG) the composition is skewed to basic and acidic residues. The segment covering 563 to 574 (DSPSIQSKAVTN) has biased composition (polar residues). The region spanning 573–655 (TNSQMDEIAA…NNIADNLSET (83 aa)) is the Death domain.

As to quaternary structure, component of the THO complex. Expressed in the developing neuromast.

It localises to the nucleus. Its subcellular location is the nucleoplasm. The protein localises to the nucleus matrix. The protein resides in the cytoplasm. It is found in the cytosol. In terms of biological role, component of the THO subcomplex of the TREX complex which is thought to couple mRNA transcription, processing and nuclear export, and which specifically associates with spliced mRNA and not with unspliced pre-mRNA. Required for efficient export of polyadenylated RNA. The THOC1-THOC2-THOC3 core complex alone is sufficient to bind export factor NXF1-NXT1 and promote ATPase activity of DDX39B. TREX is recruited to spliced mRNAs by a transcription-independent mechanism, binds to mRNA upstream of the exon-junction complex (EJC) and is recruited in a splicing- and cap-dependent manner to a region near the 5' end of the mRNA where it functions in mRNA export to the cytoplasm via the TAP/NXF1 pathway. Regulates transcriptional elongation of a subset of genes. Involved in genome stability by preventing co-transcriptional R-loop formation. May play a role in hair cell formation, hence may be involved in hearing. Participates in an apoptotic pathway which is characterized by activation of caspase-6, increases in the expression of BAK1 and BCL2L1 and activation of NF-kappa-B. This pathway does not require p53/TP53, nor does the presence of p53/TP53 affect the efficiency of cell killing. Activates a G2/M cell cycle checkpoint prior to the onset of apoptosis. Apoptosis is inhibited by association with RB1. Essential for early embryonic development. Required for normal gene expression during postnatal testis development. The polypeptide is THO complex subunit 1 (thoc1) (Danio rerio (Zebrafish)).